A 650-amino-acid polypeptide reads, in one-letter code: MGKIIGIDLGTTNSCVAILEGNTPKVIENSEGARTTPSIIAYMEDGEILVGAPAKRQAVTNPRNTLYAVKRLIGRKFEEKEVQKDIGLMPYSIVKADNGDAWVSVRDQKLAPPQVSAEVLRKMKKTAEDYLGEPVTEAVITVPAYFNDSQRQATKDAGRIAGLDVKRIINEPTAAALAFGMDKNEKGDRKIAVYDLGGGTFDISIIEIADVDGEKQFEVLSTNGDTFLGGEDFDQRIIDYIISEFKKDQGVDLSKDVLALQRLKEAAEKAKIELSSSQQTEINLPYITADASGPKHLNLKMTRAKLESLVEELITRTIEPCRIAIKDAGVKVSDIDDVILVGGMTRMPKVQEQVKEFFGKEARKDVNPDEAVAVGAAIQGSVLSGDRTDVLLLDVTPLSLGIETLGGVMTKMITKNTTIPTKHAQVFSTADDNQPAVTIKVFQGEREMASGNKLLGEFNLEGIPPAARGTPQIEVSFDIDANGILHVGAKDKATGKENRITIKANSGLSEDEIQRMVKDAEANAEEDKKARELADARNQADALIHSTKKALTEYGDKLEAGEKEKIEAAIKELEDAARGGDKAEIDAKVNALSEVSQKLGEKVYADMQAKAGEGATAGAAAGAGAAGGQQAQPQDDNVVDAEFKEVNDKK.

Thr-200 carries the post-translational modification Phosphothreonine; by autocatalysis. Over residues Gly-612–Gln-632 the composition is skewed to low complexity. Residues Gly-612–Lys-650 form a disordered region. Residues Ala-641–Lys-650 are compositionally biased toward basic and acidic residues.

This sequence belongs to the heat shock protein 70 family.

Its function is as follows. Acts as a chaperone. The chain is Chaperone protein DnaK from Cupriavidus necator (strain ATCC 17699 / DSM 428 / KCTC 22496 / NCIMB 10442 / H16 / Stanier 337) (Ralstonia eutropha).